Consider the following 441-residue polypeptide: Methionine gamma-lyase (441 aa).

Positions 1 to 25 (MAHFLETQEPLVFSGKKRNDRDDED) are disordered. An N6-(pyridoxal phosphate)lysine modification is found at lysine 248.

Belongs to the trans-sulfuration enzymes family. In terms of assembly, homotetramer. The cofactor is pyridoxal 5'-phosphate. As to expression, expressed in roots, stems, siliques, leaves, flowers and seeds after imbibition (at protein level). Transcripts accumulate in dry mature seeds, but at protein level, only present upon imbibition.

The protein resides in the cytoplasm. It catalyses the reaction L-methionine + H2O = methanethiol + 2-oxobutanoate + NH4(+). Its function is as follows. Catalyzes the degradation of L-methionine to alpha-ketobutyrate, methanethiol and ammonia. Exhibits a high activity toward L-methionine, L-ethionine, L-homocysteine and seleno-L-methionine, but not L-cysteine. Involved in an alternative cysteine biosynthesis pathway to the reverse trans-sulfuration pathway (methionine-&gt;homocysteine-&gt;cystathionine-&gt;cysteine) in which methanethiol is an intermediate. Also mediates an alternative isoleucine biosynthesis pathway in which 2-ketobutyrate is an intermediate. The polypeptide is Methionine gamma-lyase (MGL) (Arabidopsis thaliana (Mouse-ear cress)).